Reading from the N-terminus, the 288-residue chain is Phenazine biosynthesis-like domain-containing protein (288 aa).

Residue Glu-46 is part of the active site.

The protein belongs to the PhzF family. As to quaternary structure, interacts with UNRIP/MAWD.

This is Phenazine biosynthesis-like domain-containing protein (PBLD) from Homo sapiens (Human).